The primary structure comprises 363 residues: MKVAISGGGTGGHVYPALALIRELKKIHPEAEFLYIGTEKGLEAGIVKREGIPFEAIEITGFKRSLSLENIKTVMRFLSGAKKSKQILRDFKPDVVIGTGGYVCGPVVYAAAKLKIPTLIHEQNSVAGLTNKFLSRYTDKVAICFEEVSDSFASEKIVFTGNPRASEVVGVDSEGALETYGLVSGKPTVLVFGGSRGARGVNEAVEAILPEWNNRDFQLLYVTGDVHYEKIKDSLAELNLGNHISVQPFIYDMPKILNAVTLVVSRAGATTLAELTALGVPSILIPSPYVTANHQENNARALEKNNAAIVITEAELKNTDLMATVDSILNDEAKLNGMKLSAKQMGRPDAAAKLVEAVLSIMK.

UDP-N-acetyl-alpha-D-glucosamine is bound by residues 10–12, Asn124, Ser195, Ile250, and Gln295; that span reads TGG.

This sequence belongs to the glycosyltransferase 28 family. MurG subfamily.

It localises to the cell membrane. It catalyses the reaction di-trans,octa-cis-undecaprenyl diphospho-N-acetyl-alpha-D-muramoyl-L-alanyl-D-glutamyl-meso-2,6-diaminopimeloyl-D-alanyl-D-alanine + UDP-N-acetyl-alpha-D-glucosamine = di-trans,octa-cis-undecaprenyl diphospho-[N-acetyl-alpha-D-glucosaminyl-(1-&gt;4)]-N-acetyl-alpha-D-muramoyl-L-alanyl-D-glutamyl-meso-2,6-diaminopimeloyl-D-alanyl-D-alanine + UDP + H(+). It functions in the pathway cell wall biogenesis; peptidoglycan biosynthesis. Cell wall formation. Catalyzes the transfer of a GlcNAc subunit on undecaprenyl-pyrophosphoryl-MurNAc-pentapeptide (lipid intermediate I) to form undecaprenyl-pyrophosphoryl-MurNAc-(pentapeptide)GlcNAc (lipid intermediate II). This chain is UDP-N-acetylglucosamine--N-acetylmuramyl-(pentapeptide) pyrophosphoryl-undecaprenol N-acetylglucosamine transferase, found in Listeria monocytogenes serotype 4b (strain CLIP80459).